The chain runs to 172 residues: AIG2-like protein C (172 aa).

Position 13 to 18 (13 to 18) interacts with substrate; sequence YGSLQE. Glu81 functions as the Proton acceptor in the catalytic mechanism.

Belongs to the gamma-glutamylcyclotransferase family. Expressed in flowers, leaves, stems and roots.

Functionally, putative gamma-glutamylcyclotransferase. This Arabidopsis thaliana (Mouse-ear cress) protein is AIG2-like protein C.